Here is a 252-residue protein sequence, read N- to C-terminus: Triosephosphate isomerase (252 aa).

10–12 lines the substrate pocket; it reads NWK. His96 acts as the Electrophile in catalysis. Glu168 functions as the Proton acceptor in the catalytic mechanism. Substrate-binding positions include Gly174, Ser214, and 235-236; that span reads GG.

Belongs to the triosephosphate isomerase family. Homodimer.

The protein localises to the cytoplasm. It carries out the reaction D-glyceraldehyde 3-phosphate = dihydroxyacetone phosphate. The protein operates within carbohydrate biosynthesis; gluconeogenesis. It participates in carbohydrate degradation; glycolysis; D-glyceraldehyde 3-phosphate from glycerone phosphate: step 1/1. In terms of biological role, involved in the gluconeogenesis. Catalyzes stereospecifically the conversion of dihydroxyacetone phosphate (DHAP) to D-glyceraldehyde-3-phosphate (G3P). This chain is Triosephosphate isomerase, found in Lactobacillus acidophilus (strain ATCC 700396 / NCK56 / N2 / NCFM).